Reading from the N-terminus, the 130-residue chain is Small ribosomal subunit protein uS8 (130 aa).

The protein belongs to the universal ribosomal protein uS8 family. In terms of assembly, part of the 30S ribosomal subunit. Contacts proteins S5 and S12.

Functionally, one of the primary rRNA binding proteins, it binds directly to 16S rRNA central domain where it helps coordinate assembly of the platform of the 30S subunit. The polypeptide is Small ribosomal subunit protein uS8 (Cytophaga hutchinsonii (strain ATCC 33406 / DSM 1761 / CIP 103989 / NBRC 15051 / NCIMB 9469 / D465)).